Here is a 515-residue protein sequence, read N- to C-terminus: MQLGRHNSGSIKKRLEMYILSIISASLDYKSAAIDIRERFSYTSTRIREILRRIKAADGVSGAVLLCTCNRTELYISGDNIENMNPALLLCQLSGEEDHKSLMTLFSIRHDSEAIFHLMEVACGLQSMVLFEDRVITQVKNAAAISREEKTIDSTLETLFRLCITAAKKAKTEIKVKAVPTSAAERAITELSKKYCFTDKRILVIGNGEIGRLCCKKLIELGAEITITLRKYKHGEIIIPVGCNTIPYDEREEVLPLSDVVISATTSPHFTITYDMIEKLERKPEIFVDLALPRDIESSISNFTGVELYNLDRFYTDYSVLNQKEVSKIREIINHFILQFEKWKDYREEAAFTKIPDLHNDTLYGRFPLFIDLSGKKVLVVGGGEIATRRVKTLLRFGADIYLVAPHLTSELQEMLNCKLINYREGYYESQDIQNMFLVIAATNDRETNHKVYLDAKEKGIQMSIADCREECSFYFPAIFEFDGIVGGLVSQNGDNHSLVKSVAEQIRKIGQATD.

Residues 26 to 27 (SL) and 47 to 48 (IR) each bind NAD(+). The glutamyl-tRNA reductase stretch occupies residues 26–174 (SLDYKSAAID…TAAKKAKTEI (149 aa)). L-glutamyl-tRNA(Glu)-binding positions include 68–71 (TCNR), S127, E132, and Q138. The active-site Nucleophile is the C69. 206-211 (GNGEIG) lines the NADP(+) pocket. A precorrin-2 dehydrogenase /sirohydrochlorin ferrochelatase region spans residues 367 to 507 (FPLFIDLSGK…SLVKSVAEQI (141 aa)).

This sequence in the N-terminal section; belongs to the glutamyl-tRNA reductase family. The protein in the C-terminal section; belongs to the precorrin-2 dehydrogenase / sirohydrochlorin ferrochelatase family. As to quaternary structure, homodimer.

The enzyme catalyses (S)-4-amino-5-oxopentanoate + tRNA(Glu) + NADP(+) = L-glutamyl-tRNA(Glu) + NADPH + H(+). The catalysed reaction is precorrin-2 + NAD(+) = sirohydrochlorin + NADH + 2 H(+). It carries out the reaction siroheme + 2 H(+) = sirohydrochlorin + Fe(2+). It functions in the pathway cofactor biosynthesis; adenosylcobalamin biosynthesis; sirohydrochlorin from precorrin-2: step 1/1. Its pathway is porphyrin-containing compound metabolism; siroheme biosynthesis; siroheme from sirohydrochlorin: step 1/1. It participates in porphyrin-containing compound metabolism; siroheme biosynthesis; sirohydrochlorin from precorrin-2: step 1/1. The protein operates within porphyrin-containing compound metabolism; protoporphyrin-IX biosynthesis; 5-aminolevulinate from L-glutamyl-tRNA(Glu): step 1/2. Functionally, multifunctional enzyme that catalyzes the NADPH-dependent reduction of glutamyl-tRNA(Glu) to glutamate 1-semialdehyde (GSA), the NAD-dependent ring dehydrogenation of precorrin-2 to sirohydrochlorin and finally, the ferrochelation of sirohydrochlorin to yield siroheme. The polypeptide is Probable multifunctional siroheme biosynthesis protein HemA (Ruminiclostridium josui (Clostridium josui)).